The following is a 101-amino-acid chain: Small ribosomal subunit protein uS14 (101 aa).

The protein belongs to the universal ribosomal protein uS14 family. Part of the 30S ribosomal subunit. Contacts proteins S3 and S10.

Binds 16S rRNA, required for the assembly of 30S particles and may also be responsible for determining the conformation of the 16S rRNA at the A site. The protein is Small ribosomal subunit protein uS14 of Zymomonas mobilis subsp. mobilis (strain ATCC 31821 / ZM4 / CP4).